The sequence spans 424 residues: Enolase (424 aa).

Gln-162 provides a ligand contact to (2R)-2-phosphoglycerate. Glu-204 acts as the Proton donor in catalysis. Residues Asp-241, Glu-284, and Asp-311 each contribute to the Mg(2+) site. Positions 336, 365, 366, and 387 each coordinate (2R)-2-phosphoglycerate. Lys-336 functions as the Proton acceptor in the catalytic mechanism.

It belongs to the enolase family. Requires Mg(2+) as cofactor.

The protein localises to the cytoplasm. It is found in the secreted. It localises to the cell surface. It catalyses the reaction (2R)-2-phosphoglycerate = phosphoenolpyruvate + H2O. The protein operates within carbohydrate degradation; glycolysis; pyruvate from D-glyceraldehyde 3-phosphate: step 4/5. Its function is as follows. Catalyzes the reversible conversion of 2-phosphoglycerate (2-PG) into phosphoenolpyruvate (PEP). It is essential for the degradation of carbohydrates via glycolysis. This is Enolase from Agrobacterium fabrum (strain C58 / ATCC 33970) (Agrobacterium tumefaciens (strain C58)).